Here is a 214-residue protein sequence, read N- to C-terminus: Pyridoxine/pyridoxamine 5'-phosphate oxidase (214 aa).

Residues 8 to 11 (RTNY) and K66 contribute to the substrate site. FMN-binding positions include 61 to 66 (RIVLIK), 76 to 77 (FT), R82, K83, and Q105. 3 residues coordinate substrate: Y123, R127, and S131. Residues 140-141 (QS) and W184 contribute to the FMN site. 190 to 192 (RLH) contributes to the substrate binding site. R194 contributes to the FMN binding site.

The protein belongs to the pyridoxamine 5'-phosphate oxidase family. As to quaternary structure, homodimer. Requires FMN as cofactor.

The enzyme catalyses pyridoxamine 5'-phosphate + O2 + H2O = pyridoxal 5'-phosphate + H2O2 + NH4(+). The catalysed reaction is pyridoxine 5'-phosphate + O2 = pyridoxal 5'-phosphate + H2O2. It functions in the pathway cofactor metabolism; pyridoxal 5'-phosphate salvage; pyridoxal 5'-phosphate from pyridoxamine 5'-phosphate: step 1/1. Its pathway is cofactor metabolism; pyridoxal 5'-phosphate salvage; pyridoxal 5'-phosphate from pyridoxine 5'-phosphate: step 1/1. Catalyzes the oxidation of either pyridoxine 5'-phosphate (PNP) or pyridoxamine 5'-phosphate (PMP) into pyridoxal 5'-phosphate (PLP). This is Pyridoxine/pyridoxamine 5'-phosphate oxidase from Burkholderia thailandensis (strain ATCC 700388 / DSM 13276 / CCUG 48851 / CIP 106301 / E264).